A 91-amino-acid polypeptide reads, in one-letter code: Small ribosomal subunit protein bS6 (91 aa).

Belongs to the bacterial ribosomal protein bS6 family.

Its function is as follows. Binds together with bS18 to 16S ribosomal RNA. This chain is Small ribosomal subunit protein bS6, found in Leptospira biflexa serovar Patoc (strain Patoc 1 / Ames).